A 543-amino-acid chain; its full sequence is Tubby-related protein 1 (543 aa).

The tract at residues 1 to 290 (MPLQEETLRE…RASSPPVEVG (290 aa)) is disordered. Composition is skewed to basic and acidic residues over residues 46–56 (PETPDSLESKP) and 86–99 (FLRDPEAKKRDPRE). 2 stretches are compositionally biased toward acidic residues: residues 110 to 132 (GGEENSEEDSDDDDNDDDEEEEE) and 244 to 255 (KKEEEEEVEEEV). Residues 267 to 276 (GRAKGKGKKK) show a composition bias toward basic residues.

Belongs to the TUB family. In terms of assembly, homodimer. May interact with ABCF1, PSIP1, ZEB1 and HMGB2 (Potential). Interacts with F-actin. Interacts with DNM1. Interacts with TUB. Interacts with TYRO3. In terms of tissue distribution, retina specific. Detected in the outer plexiform layer in photoreceptor cells (at protein level).

It is found in the cytoplasm. The protein localises to the cell membrane. The protein resides in the secreted. Its subcellular location is the synapse. Functionally, required for normal development of photoreceptor synapses. Required for normal photoreceptor function and for long-term survival of photoreceptor cells. Interacts with cytoskeleton proteins and may play a role in protein transport in photoreceptor cells. Binds lipids, especially phosphatidylinositol 3-phosphate, phosphatidylinositol 4-phosphate, phosphatidylinositol 5-phosphate, phosphatidylinositol 3,4-bisphosphate, phosphatidylinositol 4,5-bisphosphate, phosphatidylinositol 3,4,5-bisphosphate, phosphatidylserine and phosphatidic acid (in vitro). Contribute to stimulation of phagocytosis of apoptotic retinal pigment epithelium (RPE) cells and macrophages. This chain is Tubby-related protein 1 (Tulp1), found in Mus musculus (Mouse).